A 228-amino-acid polypeptide reads, in one-letter code: Superoxide dismutase [Mn], mitochondrial (228 aa).

Residues 1-24 constitute a mitochondrion transit peptide; the sequence is MALRNLMTKKPFAGILTFRQQLRC. The Mn(2+) site is built by His-52, His-100, Asp-189, and His-193.

Belongs to the iron/manganese superoxide dismutase family. In terms of assembly, homotetramer. Mn(2+) serves as cofactor.

It localises to the mitochondrion matrix. It catalyses the reaction 2 superoxide + 2 H(+) = H2O2 + O2. Functionally, destroys superoxide anion radicals which are normally produced within the cells and which are toxic to biological systems. The sequence is that of Superoxide dismutase [Mn], mitochondrial (SODA) from Capsicum annuum (Capsicum pepper).